A 483-amino-acid polypeptide reads, in one-letter code: Regulatory protein ViaA (483 aa).

This sequence belongs to the ViaA family. Homodimer. Interacts with RavA.

The protein localises to the cytoplasm. Component of the RavA-ViaA chaperone complex, which may act on the membrane to optimize the function of some of the respiratory chains. ViaA stimulates the ATPase activity of RavA. The chain is Regulatory protein ViaA from Escherichia coli O6:K15:H31 (strain 536 / UPEC).